We begin with the raw amino-acid sequence, 327 residues long: Microtubule-associated protein RP/EB family member 2 (327 aa).

The interval 1 to 21 is disordered; the sequence is MPGPTQTLSPNGENNNDIIQD. Residue P2 is modified to N-acetylalanine. Phosphoserine is present on S9. Positions 57-159 constitute a Calponin-homology (CH) domain; that stretch reads TMSRHDIIAW…FIQWFKKFYD (103 aa). Y167 is modified (phosphotyrosine). 2 disordered regions span residues 171-240 and 299-327; these read EARQ…DKDL and ASEE…QEEY. Residues 187-327 are DCTN1-binding; the sequence is QIFNLPKKSH…EQQPPQQEEY (141 aa). The segment covering 200 to 234 has biased composition (low complexity); it reads SPTAGAAKSSPAAKPGSTPSRPSSAKRASSSGSAS. 2 positions are modified to phosphoserine: S219 and S236. The 71-residue stretch at 236 to 306 folds into the EB1 C-terminal domain; that stretch reads SDKDLETQVI…LYASEEHEGH (71 aa). An APC-binding region spans residues 259–302; that stretch reads EGVEKERDFYFGKLREIELLCQEHGQENDDLVQRLMDILYASEE. The span at 300–317 shows a compositional bias: basic and acidic residues; sequence SEEHEGHTEEPEAEEQAH. Residues 318–327 show a composition bias toward low complexity; sequence EQQPPQQEEY.

This sequence belongs to the MAPRE family. Interacts with DCTN1. Interacts with APC (via C-terminal). Interacts with monomeric and polymerized tubulin. Interacts with SLAIN1. Interacts (via the N-terminal region) with BAG1. Interacts with ASB14. Interacts with HAX1; this interaction is essential for epidermal cell migration. In terms of processing, phosphorylated at Ser-236 by CK2 leading to enhanced cell adhesion. Phosphorylated by CDK1 and AURKB during mitosis reduces the binding affinity of MAPRE2 for microtubules. Post-translationally, ubiquitinated in an ASB14-dependent manner; leading to proteasomal degradation. In terms of tissue distribution, expressed in different tumor cell lines. Up-regulated in activated B- and T-lymphocytes.

It localises to the cytoplasm. The protein localises to the cytoskeleton. Functionally, adapter protein that is involved in microtubule polymerization, and spindle function by stabilizing microtubules and anchoring them at centrosomes. Therefore, ensures mitotic progression and genome stability. Acts as a central regulator of microtubule reorganization in apico-basal epithelial differentiation. Plays a role during oocyte meiosis by regulating microtubule dynamics. Participates in neurite growth by interacting with plexin B3/PLXNB3 and microtubule reorganization during apico-basal epithelial differentiation. Also plays an essential role for cell migration and focal adhesion dynamics. Mechanistically, recruits HAX1 to microtubules in order to regulate focal adhesion dynamics. The sequence is that of Microtubule-associated protein RP/EB family member 2 (MAPRE2) from Homo sapiens (Human).